Consider the following 434-residue polypeptide: UDP-N-acetylenolpyruvoylglucosamine reductase (434 aa).

Positions 51-238 constitute an FAD-binding PCMH-type domain; that stretch reads IGAAPAGVVE…TAVEFQLTTD (188 aa). Residue arginine 216 is part of the active site. Serine 299 acts as the Proton donor in catalysis. The active site involves glutamate 425.

The protein belongs to the MurB family. FAD is required as a cofactor.

The protein resides in the cytoplasm. The enzyme catalyses UDP-N-acetyl-alpha-D-muramate + NADP(+) = UDP-N-acetyl-3-O-(1-carboxyvinyl)-alpha-D-glucosamine + NADPH + H(+). Its pathway is cell wall biogenesis; peptidoglycan biosynthesis. In terms of biological role, cell wall formation. This Corynebacterium jeikeium (strain K411) protein is UDP-N-acetylenolpyruvoylglucosamine reductase.